Reading from the N-terminus, the 338-residue chain is Ketol-acid reductoisomerase (NADP(+)) (338 aa).

Positions 1-181 (MHVYYDKDCD…GGGRTGIIET (181 aa)) constitute a KARI N-terminal Rossmann domain. NADP(+) is bound by residues 24–27 (YGSQ), Arg-47, Ser-50, Thr-52, and 82–85 (DEFQ). His-107 is an active-site residue. Gly-133 is an NADP(+) binding site. The 146-residue stretch at 182–327 (TFKDETETDL…AKLRAMMPWI (146 aa)) folds into the KARI C-terminal knotted domain. Mg(2+) is bound by residues Asp-190, Glu-194, Glu-226, and Glu-230. Residue Ser-251 participates in substrate binding.

This sequence belongs to the ketol-acid reductoisomerase family. It depends on Mg(2+) as a cofactor.

It carries out the reaction (2R)-2,3-dihydroxy-3-methylbutanoate + NADP(+) = (2S)-2-acetolactate + NADPH + H(+). The enzyme catalyses (2R,3R)-2,3-dihydroxy-3-methylpentanoate + NADP(+) = (S)-2-ethyl-2-hydroxy-3-oxobutanoate + NADPH + H(+). It participates in amino-acid biosynthesis; L-isoleucine biosynthesis; L-isoleucine from 2-oxobutanoate: step 2/4. Its pathway is amino-acid biosynthesis; L-valine biosynthesis; L-valine from pyruvate: step 2/4. Involved in the biosynthesis of branched-chain amino acids (BCAA). Catalyzes an alkyl-migration followed by a ketol-acid reduction of (S)-2-acetolactate (S2AL) to yield (R)-2,3-dihydroxy-isovalerate. In the isomerase reaction, S2AL is rearranged via a Mg-dependent methyl migration to produce 3-hydroxy-3-methyl-2-ketobutyrate (HMKB). In the reductase reaction, this 2-ketoacid undergoes a metal-dependent reduction by NADPH to yield (R)-2,3-dihydroxy-isovalerate. The polypeptide is Ketol-acid reductoisomerase (NADP(+)) (Cellvibrio japonicus (strain Ueda107) (Pseudomonas fluorescens subsp. cellulosa)).